The sequence spans 329 residues: Ribonucleoside-diphosphate reductase small chain (329 aa).

Fe cation-binding residues include Asp75, Glu106, and His109. Tyr113 is a catalytic residue. Fe cation is bound by residues Glu168, Glu202, and His205.

The protein belongs to the ribonucleoside diphosphate reductase small chain family. As to quaternary structure, heterodimer of a large and a small chain. Requires Fe cation as cofactor.

Its subcellular location is the cytoplasm. It carries out the reaction a 2'-deoxyribonucleoside 5'-diphosphate + [thioredoxin]-disulfide + H2O = a ribonucleoside 5'-diphosphate + [thioredoxin]-dithiol. Its function is as follows. Provides the precursors necessary for DNA synthesis. Catalyzes the biosynthesis of deoxyribonucleotides from the corresponding ribonucleotides. This chain is Ribonucleoside-diphosphate reductase small chain, found in Nicotiana tabacum (Common tobacco).